The sequence spans 336 residues: Cytosolic Fe-S cluster assembly factor NBP35 (336 aa).

Residues 1-20 (MIATQRPFPIPSPVPLAPSS) form a disordered region. Positions 35, 49, 52, and 58 each coordinate [4Fe-4S] cluster. ATP is bound at residue 88–95 (GKGGVGKS). Residues C261 and C264 each coordinate [4Fe-4S] cluster.

The protein belongs to the Mrp/NBP35 ATP-binding proteins family. NUBP1/NBP35 subfamily. Heterotetramer of 2 NBP35 and 2 CFD1 chains. Requires [4Fe-4S] cluster as cofactor.

It is found in the cytoplasm. Its function is as follows. Component of the cytosolic iron-sulfur (Fe/S) protein assembly (CIA) machinery. Required for maturation of extramitochondrial Fe-S proteins. The NBP35-CFD1 heterotetramer forms a Fe-S scaffold complex, mediating the de novo assembly of an Fe-S cluster and its transfer to target apoproteins. The protein is Cytosolic Fe-S cluster assembly factor NBP35 of Cryptococcus neoformans var. neoformans serotype D (strain B-3501A) (Filobasidiella neoformans).